A 341-amino-acid chain; its full sequence is MNNYLRKLVEGQHLTEEEMYKAGLLLLNENILESEIAAFLVLLKAKGETAEEIYGLVRALREKALPFSNHIQGAMDNCGTGGDGAQTFNISTTSAFVLAGADVKVAKHGNRAVSSKTGSADLLEELGVNISSTPNEIDYLLEHVGIAFLFAPAMHPALKRIMKIRKELNVPTIFNLIGPLTNPVNLETQFVGIYKRDMLLPVAQVLQKLGRKQALVVNGSGFLDEASLQGENHVVILKDNEIVETSIEPEKYGFSIVKNEEIRGGNSKENAKITLGVLSGEKSVYRDTVLFNAGLALFANGKAKTIEEGITLAAHSIDSGKALAKLNLLIAASNEKLERVN.

Residues Gly-79, 82–83 (GD), Thr-87, 89–92 (NIST), 107–115 (KHGNRAVSS), and Ser-119 each bind 5-phospho-alpha-D-ribose 1-diphosphate. Gly-79 provides a ligand contact to anthranilate. Ser-91 is a Mg(2+) binding site. An anthranilate-binding site is contributed by Asn-110. Arg-165 contacts anthranilate. Asp-224 and Glu-225 together coordinate Mg(2+).

This sequence belongs to the anthranilate phosphoribosyltransferase family. Homodimer. The cofactor is Mg(2+).

The enzyme catalyses N-(5-phospho-beta-D-ribosyl)anthranilate + diphosphate = 5-phospho-alpha-D-ribose 1-diphosphate + anthranilate. The protein operates within amino-acid biosynthesis; L-tryptophan biosynthesis; L-tryptophan from chorismate: step 2/5. Functionally, catalyzes the transfer of the phosphoribosyl group of 5-phosphorylribose-1-pyrophosphate (PRPP) to anthranilate to yield N-(5'-phosphoribosyl)-anthranilate (PRA). This Bacillus cereus (strain AH187) protein is Anthranilate phosphoribosyltransferase.